The following is a 737-amino-acid chain: MPEATEHPPIGEAQTEPAQSGCPMVIKPPVEGGSNRDWWPNAVNLKMLQKDPEVIDPMDEGYDYREAVQTLDVDQLARDFDELCTNSQDWWPADFGHYGPLFIRMSWHAAGTYRVQDGRGGAGKGMQRFAPLNSWPDNVSLDKARRLLWPLKKKYGKKLSWSDLIVYAGNRAMENMGFKTAGFAFGRPDYWEPEEDVYWGAEHEWLGSQDRYAGANGDRTKLENPLGASHMGLIYVNPEGPEGNPDPIAAAIDIRETFGRMAMNDVETAALIVGGHTFGKTHGATDIVNGPEPEAAPLEQMGLGWSNPGVGIDTVSSGLEVTWTHTPTKWDNSFLEILYGNEWELFKSPAGANQWRPKDNGWANSVPMAQGTGKTHPAMLTTDLSMRMDPIYGEITRRWLDHPEELAEEYAKAWFKLLHRDMGPVQRYLGPLVPTQTWLWQDIVPAGKPLSDADVATLKGAIADSGLTVQQLVSTAWKAASSFRISDMRGGANGGRIRLQPQLGWESNEPDELAQVISKLEEIQGSSGIDVSFADLVVLGGNVGIETAAKAAGFDIEVPFSSGRGDATQEQTDVEAFSYLEPKADGFRNYVGKGLNLPAEYQLIDQANLLNLSAPQMTVLIGGLRALGITHGDSKLGVLTDTPGQLTNDYFVNLTDMGVKWAPAPADDGTYVGTDRDTGEVKYTASRVDLLFGSNSQLRALAEVYAEDDSRDKFVKDFVAAWVNVMDADRYDIGKGA.

The tract at residues Met1–Gly33 is disordered. A cross-link (tryptophyl-tyrosyl-methioninium (Trp-Tyr) (with M-261)) is located at residues Trp107–Tyr235. Residue His108 is the Proton acceptor of the active site. The tryptophyl-tyrosyl-methioninium (Tyr-Met) (with W-107) cross-link spans Tyr235–Met261. Residue His276 participates in heme binding.

It belongs to the peroxidase family. Peroxidase/catalase subfamily. Homodimer or homotetramer. Heme b is required as a cofactor. Formation of the three residue Trp-Tyr-Met cross-link is important for the catalase, but not the peroxidase activity of the enzyme.

The enzyme catalyses H2O2 + AH2 = A + 2 H2O. It carries out the reaction 2 H2O2 = O2 + 2 H2O. Functionally, bifunctional enzyme with both catalase and broad-spectrum peroxidase activity. This is Catalase-peroxidase 2 from Mycolicibacterium vanbaalenii (strain DSM 7251 / JCM 13017 / BCRC 16820 / KCTC 9966 / NRRL B-24157 / PYR-1) (Mycobacterium vanbaalenii).